Consider the following 154-residue polypeptide: MAQSINITELNLPQLEMLKNQLDQEVEFLSTSIAQLKVVQTKYVEAKDCLNVLNKSNEGKELLVPLTSSMYVPGKLHDVEHVLIDVGTGYYVEKTAEDAKDFFKRKIDFLTKQMEKIQPALQEKHAMKQAVMEMMSQKIQQLTALGAAQATAKA.

N-acetylalanine is present on A2. An N6-acetyllysine modification is found at K42. Residue S56 is modified to Phosphoserine.

The protein belongs to the prefoldin subunit alpha family. Heterohexamer of two PFD-alpha type and four PFD-beta type subunits. Binds to MYC; interacts with its N-terminal domain. As to expression, highly expressed in pancreas and skeletal muscle and moderately in other tissues.

It is found in the nucleus. The protein localises to the cytoplasm. Its function is as follows. Binds specifically to cytosolic chaperonin (c-CPN) and transfers target proteins to it. Binds to nascent polypeptide chain and promotes folding in an environment in which there are many competing pathways for nonnative proteins. Represses the transcriptional activity of MYC. The polypeptide is Prefoldin subunit 5 (PFDN5) (Homo sapiens (Human)).